The chain runs to 123 residues: Large ribosomal subunit protein uL14 (123 aa).

Belongs to the universal ribosomal protein uL14 family. Part of the 50S ribosomal subunit. Forms a cluster with proteins L3 and L19. In the 70S ribosome, L14 and L19 interact and together make contacts with the 16S rRNA in bridges B5 and B8.

Its function is as follows. Binds to 23S rRNA. Forms part of two intersubunit bridges in the 70S ribosome. This chain is Large ribosomal subunit protein uL14, found in Enterobacter sp. (strain 638).